We begin with the raw amino-acid sequence, 858 residues long: RNA-directed RNA polymerase 2a (858 aa).

The RdRp catalytic domain maps to 511 to 624; it reads KHCFEIDLSK…FSVLPPVGDP (114 aa). Residues 772–785 are compositionally biased toward basic and acidic residues; that stretch reads TKQREKKDGIERRR. The interval 772–830 is disordered; the sequence is TKQREKKDGIERRRNDKRRTPTGSYGGGEEAETKVSQAESTGTRSQKSQREGAFKSQAV. A compositionally biased stretch (polar residues) spans 805 to 817; that stretch reads KVSQAESTGTRSQ.

Belongs to the ssRNA positive-strand viruses RNA-directed RNA polymerase family. Interacts with replication protein 1a.

The enzyme catalyses RNA(n) + a ribonucleoside 5'-triphosphate = RNA(n+1) + diphosphate. Functionally, RNA-dependent RNA polymerase which replicates the viral genome composed of 3 RNA segments, RNA1, RNA2 and RNA3. The polypeptide is RNA-directed RNA polymerase 2a (Cucumber mosaic virus (strain As) (CMV)).